The chain runs to 156 residues: Snaclec 2 (156 aa).

Positions 1–21 (MGRFIFLSSGLLVVFLSLSGA) are cleaved as a signal peptide. Cystine bridges form between Cys-25–Cys-36, Cys-53–Cys-150, and Cys-125–Cys-142. The 120-residue stretch at 32–151 (FDQHCYRAFD…CGDDYPFVCK (120 aa)) folds into the C-type lectin domain.

The protein belongs to the snaclec family. As to quaternary structure, heterodimer; disulfide-linked. Expressed by the venom gland.

Its subcellular location is the secreted. In terms of biological role, interferes with one step of hemostasis (modulation of platelet aggregation, or coagulation cascade, for example). The chain is Snaclec 2 from Bitis gabonica (Gaboon adder).